We begin with the raw amino-acid sequence, 120 residues long: uncharacterized protein (120 aa).

4 consecutive transmembrane segments (helical) span residues 9–29 (WPDF…LFCG), 32–52 (ALMF…ADCL), 68–88 (FVWP…VMAT), and 94–114 (GPEH…SFRF).

The protein resides in the membrane. This is an uncharacterized protein from Escherichia phage Mu (Bacteriophage Mu).